The chain runs to 657 residues: Macrolide export ATP-binding/permease protein MacB (657 aa).

The 238-residue stretch at 5–242 (LELLDVHRTY…RAVTGESAFD (238 aa)) folds into the ABC transporter domain. ATP is bound at residue 41–48 (GASGSGKS). Transmembrane regions (helical) follow at residues 276–296 (FLSV…MALG), 538–558 (IAAI…LVSV), 596–616 (IGVF…GWAV), and 620–640 (LLSV…FGLW).

The protein belongs to the ABC transporter superfamily. Macrolide exporter (TC 3.A.1.122) family. As to quaternary structure, homodimer.

The protein resides in the cell inner membrane. In terms of biological role, non-canonical ABC transporter that contains transmembrane domains (TMD), which form a pore in the inner membrane, and an ATP-binding domain (NBD), which is responsible for energy generation. Confers resistance against macrolides. This is Macrolide export ATP-binding/permease protein MacB from Chlorobium phaeobacteroides (strain DSM 266 / SMG 266 / 2430).